The sequence spans 693 residues: Transcription activator of gluconeogenesis BC1G_14637 (693 aa).

Positions 1–12 (MSGETEIDDPEV) are enriched in acidic residues. A disordered region spans residues 1–75 (MSGETEIDDP…KFDPKDPLRP (75 aa)). The segment covering 21-49 (YSDHEQELDVIGKEGDNQEMAEQKVRPDG) has biased composition (basic and acidic residues). The segment covering 52-62 (NGNTVGATATV) has biased composition (polar residues). Positions 65-74 (PKFDPKDPLR) are enriched in basic and acidic residues. The zn(2)-C6 fungal-type DNA-binding region spans 84–112 (CFACQRAHLTCGDERPCQRCIKRGLADAC). Polar residues-rich tracts occupy residues 144–155 (SSNRATAASTPT) and 275–287 (SAETPPQDSSAGM). Disordered stretches follow at residues 144–170 (SSNRATAASTPTEPSPGMGNFFSQPDT), 273–299 (SGSAETPPQDSSAGMPQNVGDLGFSNN), 350–413 (TSGS…RNRD), and 531–567 (NLNTNTGSGGPPSSGSSGRGSFTTPRMRPVNLADSNP). The segment covering 356 to 367 (SPSTDASPAAST) has biased composition (low complexity). Polar residues predominate over residues 369-379 (GFESSPTTTNY). Positions 394–408 (KSGPSGKLGPSGILG) are enriched in low complexity.

Belongs to the ERT1/acuK family.

The protein localises to the nucleus. Transcription factor which regulates nonfermentable carbon utilization. Activator of gluconeogenetic genes. The protein is Transcription activator of gluconeogenesis BC1G_14637 of Botryotinia fuckeliana (strain B05.10) (Noble rot fungus).